Consider the following 523-residue polypeptide: Volkensin (523 aa).

Residues Tyr74, Tyr113, Glu162, and Arg165 contribute to the active site. Residue 111 to 113 participates in AMP binding; that stretch reads GGY. Cystine bridges form between Cys245-Cys269 and Cys285-Cys304. A propeptide spans 251–265 (linker peptide); that stretch reads QSDSPLVIRSFVDRN. Positions 270 to 397 constitute a Ricin B-type lectin 1 domain; it reads PSGETTAFIV…YAASQAWRVT (128 aa). A carbohydrate-binding positions include 287–291, Gln300, Lys305, and Asn311; that span reads DVKVE. Cys328 and Cys343 are joined by a disulfide. 2 residues coordinate a carbohydrate: Asn358 and Asn398. 2 N-linked (GlcNAc...) asparagine glycosylation sites follow: Asn358 and Asn398. One can recognise a Ricin B-type lectin 2 domain in the interval 400 to 523; it reads TVPTVTTIVG…HGNSNQQWFL (124 aa). Intrachain disulfides connect Cys414–Cys427 and Cys453–Cys471.

It in the N-terminal section; belongs to the ribosome-inactivating protein family. Type 2 RIP subfamily. In terms of assembly, disulfide-linked dimer of A and B chains. N-glycosylated. Contains mannose and galactose. Expressed in roots (at protein level). Expressed in seeds (at protein level).

It catalyses the reaction Endohydrolysis of the N-glycosidic bond at one specific adenosine on the 28S rRNA.. Hemagglutinating activity is inhibited by galactose and structurally related sugars. Has N-glycosidase activity and is responsible for inhibiting protein synthesis through the catalytic inactivation of 60S ribosomal subunits by removing a specific adenine of 28S rRNA. Inhibits GTP-dependent binding of EF2 (elongation factor 2) to ribosomes. In terms of biological role, binds to cell receptors and probably facilitates the entry into the cell of the A chain. Also acts as a galactose-specific lectin responsible for cell agglutination. This Adenia volkensii (Kilyambiti plant) protein is Volkensin.